The sequence spans 462 residues: Cysteine--tRNA ligase (462 aa).

Position 29 (Cys29) interacts with Zn(2+). A 'HIGH' region motif is present at residues 31–41; the sequence is PTVYNHAHIGN. Cys211, His236, and Glu240 together coordinate Zn(2+). Residues 269 to 273 carry the 'KMSKS' region motif; it reads KMSKS. Lys272 contributes to the ATP binding site.

It belongs to the class-I aminoacyl-tRNA synthetase family. Monomer. Zn(2+) serves as cofactor.

It is found in the cytoplasm. The enzyme catalyses tRNA(Cys) + L-cysteine + ATP = L-cysteinyl-tRNA(Cys) + AMP + diphosphate. This Caulobacter sp. (strain K31) protein is Cysteine--tRNA ligase.